We begin with the raw amino-acid sequence, 335 residues long: Transmembrane protein 120B (335 aa).

Residues 1–39 (MSLQKCQEEWGELEKEFQQLQETHKVYKQKLEELNGLQN) adopt a coiled-coil conformation. 6 helical membrane-spanning segments follow: residues 100-122 (GLYLNLVLGNVNVTLLSNQAKFA), 130-150 (FKLYLTIILLLGAITCRFVLH), 157-177 (VFNFLLVWYYCTLTIRESILI), 193-213 (VSTFLSGVMLTWPDGLMYQIF), 268-288 (FLLPFLFFGHFWQLYNAITLF), and 300-320 (QVFVLALTFLLLFLGNFLTTL).

This sequence belongs to the TMEM120 family.

It localises to the nucleus inner membrane. In terms of biological role, necessary for efficient adipogenesis. Does not show ion channel activity. The sequence is that of Transmembrane protein 120B (tmem120b) from Xenopus tropicalis (Western clawed frog).